Reading from the N-terminus, the 508-residue chain is Cytochrome c-552 (508 aa).

A signal peptide spans 1–23 (MNKSYKILLTGSVIAIGAMGLMA). H103 contributes to the heme c binding site. Heme contacts are provided by C131, C134, and K135. Heme c-binding residues include C169, C172, H173, C211, C214, and H215. Ca(2+) contacts are provided by E217, Y218, K274, and Q276. Residue Y218 participates in substrate binding. Residue H277 coordinates substrate. Residues H288, C295, C298, H299, H313, C326, C329, H330, and H405 each coordinate heme c. Residues 485-508 (GRLDPKTLEGMSNKSSWSQTELSQ) are disordered. Positions 494–508 (GMSNKSSWSQTELSQ) are enriched in polar residues.

Belongs to the cytochrome c-552 family. Requires Ca(2+) as cofactor. It depends on heme c as a cofactor.

Its subcellular location is the periplasm. The enzyme catalyses 6 Fe(III)-[cytochrome c] + NH4(+) + 2 H2O = 6 Fe(II)-[cytochrome c] + nitrite + 8 H(+). It functions in the pathway nitrogen metabolism; nitrate reduction (assimilation). Functionally, catalyzes the reduction of nitrite to ammonia, consuming six electrons in the process. The polypeptide is Cytochrome c-552 (Desulfotalea psychrophila (strain LSv54 / DSM 12343)).